A 130-amino-acid polypeptide reads, in one-letter code: Small ribosomal subunit protein uS9 (130 aa).

This sequence belongs to the universal ribosomal protein uS9 family.

The protein is Small ribosomal subunit protein uS9 of Methylibium petroleiphilum (strain ATCC BAA-1232 / LMG 22953 / PM1).